The chain runs to 67 residues: Protein AaeX (67 aa).

Helical transmembrane passes span 9 to 29 (IFGLSFPPVFFELLVPLALFF) and 47 to 67 (PALFNTALYCCLFYLISCLFV).

The protein belongs to the AaeX family.

It localises to the cell membrane. This is Protein AaeX from Serratia marcescens.